The primary structure comprises 205 residues: Heme-binding protein 2 (205 aa).

The tract at residues 1–37 is disordered; the sequence is MAEEPEPDLGVAEGSEDQALEMPSWKAPEDIDPQPGS. N-acetylalanine is present on Ala-2. Ser-181 bears the Phosphoserine mark.

The protein belongs to the HEBP family. Monomer. Interacts with LRPPRC. May interact with BCL2L1; an interaction with BCL2L1 was observed using a peptide, but not with the full-length protein. The full-length protein would have to undergo a major conformation change for the interaction to occur. Interacts with PDCD6.

The protein resides in the cytoplasm. It localises to the mitochondrion. In terms of biological role, can promote mitochondrial permeability transition and facilitate necrotic cell death under different types of stress conditions. May have low affinity for heme. This chain is Heme-binding protein 2 (Hebp2), found in Mus musculus (Mouse).